A 221-amino-acid chain; its full sequence is uncharacterized protein (221 aa).

The N-terminal stretch at 1 to 26 is a signal peptide; that stretch reads MVRLVPRAFAATVALLAAGFSPATAS.

This is an uncharacterized protein from Mycobacterium tuberculosis (strain CDC 1551 / Oshkosh).